The primary structure comprises 97 residues: Small ribosomal subunit protein bS6 (97 aa).

This sequence belongs to the bacterial ribosomal protein bS6 family.

Binds together with bS18 to 16S ribosomal RNA. This chain is Small ribosomal subunit protein bS6, found in Lactococcus lactis subsp. cremoris (strain MG1363).